The chain runs to 565 residues: SRSF protein kinase 3 (565 aa).

Positions 1–44 (MSANAGGSGSVDCGGSSSSSQTSCGPESSGSELTPATPAPRLLQ) are disordered. The segment covering 10–31 (SVDCGGSSSSSQTSCGPESSGS) has biased composition (low complexity). A Phosphoserine modification is found at Ser49. Residues 78-563 (YHVVRKLGWG…AADCLQHPWL (486 aa)) form the Protein kinase domain. ATP-binding positions include 84-92 (LGWGHFSTV) and Lys107. Catalysis depends on Asp211, which acts as the Proton acceptor. Positions 236–253 (WQQSGAQPPSRSTVSTAP) are enriched in polar residues. Disordered stretches follow at residues 236 to 280 (WQQS…KRLL) and 295 to 350 (AAVQ…QTSG). Over residues 262-277 (SKNKRKKMRRKRKQQK) the composition is skewed to basic residues. Positions 325–350 (AGPSPASSSPVPGGERSLSPSSQTSG) are enriched in low complexity. Ser328 carries the phosphoserine modification.

Belongs to the protein kinase superfamily. CMGC Ser/Thr protein kinase family. In terms of tissue distribution, exclusively expressed in skeletal and heart muscle.

Its subcellular location is the nucleus. It localises to the cytoplasm. The enzyme catalyses L-seryl-[protein] + ATP = O-phospho-L-seryl-[protein] + ADP + H(+). It carries out the reaction L-threonyl-[protein] + ATP = O-phospho-L-threonyl-[protein] + ADP + H(+). Its function is as follows. Serine/arginine-rich protein-specific kinase which specifically phosphorylates its substrates at serine residues located in regions rich in arginine/serine dipeptides, known as RS domains. Phosphorylates the SR splicing factor SRSF1 and the lamin-B receptor (LBR) in vitro. Required for normal muscle development. The polypeptide is SRSF protein kinase 3 (Srpk3) (Mus musculus (Mouse)).